The sequence spans 942 residues: MAYPLLVLVDGHALAYRAFFALRESGLRSSRGEPTYAVFGFAQILLTALAEYRPDYAAVAFDVGRTFRDDLYAEYKAGRAETPEEFYPQFERIKQLVQALNIPIYTAEGYEADDVIGTLARQATERGVDTIILTGDSDVLQLVNDHVRVALANPYGGKTSVTLYDLEQVRKRYDGLEPDQLADLRGLKGDTSDNIPGVRGIGEKGAIALLKQFRSLDALLEQIDAAPKRYQTLLREQAEAARFSRQLATIVTDVPVQLDLEAARIGVYDRSAVMALFQELEFGVSSNLIKKLPSVVQAPTLAELPADLPAAPLTTAPTQLSLFAGESEPAQPTAEPPPVTIVRDATALADLVSRLRNAPAFAFDTECTSLQPVASDLVGISIAIAPDTVCYIPVGHQSETQVPCGEVVTALAPFFANPQQPKFAHNAKFDMEVLAGAGIKVSGLAFDTMIAAAMLGKRQGLKDLAFYELKLPEPPTTIEDLIGRGNKQISFAEVPVEQAAPYAAADALYTLRLTERLQRQLEAEPALHDLYYRVELPLIEVLTDMELTGIRLDQEYLRELGRHFAQRIADLVERIYQQAGGPFNINSGQQLNDVLFGRLGIDPRAHGLSKLKSGGYSITAEVLEELSQLYPIAADILTYRQLTKLKSTYIDALPDLVNPRTGRIHTSYNQLGAATGRLSSNNPNLQNIPVRTEEGREIRRAFVAEPGWRFVAADYSQIELRVLAHMSGDENLIAAFQQGLDIHAATASRLFGVEPTAVDKNQRRVAKTVVFGVIYGISAFGLAQRLGIERDLARQLIDNLFAQFPGIRRYIDQTLEFGRQHGYVQTLFGRRRVMEDLRASGARRAAAEREAINAPIQGTAADLMKMAMVNVHRALREQGLRTRLLLQVHDELIAEAPEDEVEPAARLLRDVMSSVYRDLVVPLSVNLEVGPNWDEMSPLAMG.

The 5'-3' exonuclease domain occupies 177 to 269 (EPDQLADLRG…LEAARIGVYD (93 aa)). Positions 340-522 (TIVRDATALA…LTERLQRQLE (183 aa)) constitute a 3'-5' exonuclease domain.

Belongs to the DNA polymerase type-A family. In terms of assembly, single-chain monomer with multiple functions.

The enzyme catalyses DNA(n) + a 2'-deoxyribonucleoside 5'-triphosphate = DNA(n+1) + diphosphate. In terms of biological role, in addition to polymerase activity, this DNA polymerase exhibits 3'-5' and 5'-3' exonuclease activity. The protein is DNA polymerase I (polA) of Chloroflexus aurantiacus (strain ATCC 29366 / DSM 635 / J-10-fl).